Reading from the N-terminus, the 592-residue chain is Putative esterase (592 aa).

The helical transmembrane segment at 12–32 (LTLIAYLSVLMGVSVYFYVLI) threads the bilayer. Asn-68, Asn-83, Asn-95, Asn-447, and Asn-510 each carry an N-linked (GlcNAc...) asparagine; by host glycan. Catalysis depends on His-513, which acts as the Charge relay system. The N-linked (GlcNAc...) asparagine; by host glycan is linked to Asn-528.

This sequence belongs to the type-B carboxylesterase/lipase family.

It localises to the membrane. The enzyme catalyses a carboxylic ester + H2O = an alcohol + a carboxylate + H(+). This is Putative esterase from Spodoptera frugiperda (Fall armyworm).